A 133-amino-acid polypeptide reads, in one-letter code: Thioredoxin H2 (133 aa).

The disordered stretch occupies residues 1 to 22 (MGGALSTVFGSGEDATAAGTES). The region spanning 6–133 (STVFGSGEDA…LEKKVSKLRA (128 aa)) is the Thioredoxin domain. Catalysis depends on nucleophile residues Cys-59 and Cys-62. A disulfide bond links Cys-59 and Cys-62.

It belongs to the thioredoxin family. Plant H-type subfamily. Interacts with MDH1.

It localises to the cytoplasm. It is found in the mitochondrion. Its function is as follows. Thiol-disulfide oxidoreductase probably involved in the redox regulation of a number of cytosolic enzymes. Possesses insulin disulfide bonds reducing activity. This Arabidopsis thaliana (Mouse-ear cress) protein is Thioredoxin H2 (TRX2).